We begin with the raw amino-acid sequence, 208 residues long: Glutathione S-transferase 1-1 (208 aa).

One can recognise a GST N-terminal domain in the interval methionine 1–aspartate 80. Glutathione contacts are provided by residues serine 9, histidine 50–isoleucine 52, and glutamate 64–arginine 66. The 122-residue stretch at cysteine 86–phenylalanine 207 folds into the GST C-terminal domain.

It belongs to the GST superfamily. Theta family. In terms of assembly, homodimer.

It catalyses the reaction RX + glutathione = an S-substituted glutathione + a halide anion + H(+). In terms of biological role, conjugation of reduced glutathione to a wide number of exogenous and endogenous hydrophobic electrophiles. The chain is Glutathione S-transferase 1-1 (GST1) from Lucilia cuprina (Green bottle fly).